The chain runs to 224 residues: Ribose-5-phosphate isomerase A (224 aa).

Residues 26–29 (TGST), 82–85 (DGAD), and 95–98 (KGGG) contribute to the substrate site. The active-site Proton acceptor is the Glu104. Lys122 lines the substrate pocket.

This sequence belongs to the ribose 5-phosphate isomerase family. In terms of assembly, homodimer.

It catalyses the reaction aldehydo-D-ribose 5-phosphate = D-ribulose 5-phosphate. It participates in carbohydrate degradation; pentose phosphate pathway; D-ribose 5-phosphate from D-ribulose 5-phosphate (non-oxidative stage): step 1/1. Its function is as follows. Catalyzes the reversible conversion of ribose-5-phosphate to ribulose 5-phosphate. The sequence is that of Ribose-5-phosphate isomerase A from Lactococcus lactis subsp. cremoris (strain SK11).